Consider the following 340-residue polypeptide: E3 ubiquitin ligase BIG BROTHER-related (340 aa).

Disordered regions lie at residues 1–56 and 133–182; these read MPME…GVGE and YDED…GNSD. The segment covering 34–46 has biased composition (polar residues); the sequence is NRQTGVVSDTGSG. Acidic residues-rich tracts occupy residues 133–164 and 173–182; these read YDEDEFDDPENEDEDDDEDEYETDDDPQEDGL and DDQEDDGNSD. Residues 288 to 329 form an RING-type; atypical zinc finger; sequence CVICRLDYEDDEDLILLPCKHSYHSECINNWLKINKVCPVCS.

In terms of processing, auto-ubiquitinated.

The enzyme catalyses S-ubiquitinyl-[E2 ubiquitin-conjugating enzyme]-L-cysteine + [acceptor protein]-L-lysine = [E2 ubiquitin-conjugating enzyme]-L-cysteine + N(6)-ubiquitinyl-[acceptor protein]-L-lysine.. The protein operates within protein modification; protein ubiquitination. In terms of biological role, E3 ubiquitin-ligase probably involved in organ size regulation. This Arabidopsis thaliana (Mouse-ear cress) protein is E3 ubiquitin ligase BIG BROTHER-related (BBR).